The chain runs to 105 residues: ATP-dependent Clp protease adapter protein ClpS (105 aa).

This sequence belongs to the ClpS family. As to quaternary structure, binds to the N-terminal domain of the chaperone ClpA.

Functionally, involved in the modulation of the specificity of the ClpAP-mediated ATP-dependent protein degradation. The sequence is that of ATP-dependent Clp protease adapter protein ClpS from Streptomyces avermitilis (strain ATCC 31267 / DSM 46492 / JCM 5070 / NBRC 14893 / NCIMB 12804 / NRRL 8165 / MA-4680).